The sequence spans 242 residues: Protein fmp-52, mitochondrial (242 aa).

The N-terminal 87 residues, 1 to 87, are a transit peptide targeting the mitochondrion; sequence MSTSTPTSTA…VISSLGTTRV (87 aa). Positions 33 to 58 are disordered; that stretch reads SSQVQTISRRAPANPTNSSRLSPTVN. Residues 35–58 show a composition bias toward polar residues; it reads QVQTISRRAPANPTNSSRLSPTVN.

The protein belongs to the FMP52 family.

Its subcellular location is the mitochondrion outer membrane. The sequence is that of Protein fmp-52, mitochondrial (fmp-52) from Neurospora crassa (strain ATCC 24698 / 74-OR23-1A / CBS 708.71 / DSM 1257 / FGSC 987).